Consider the following 126-residue polypeptide: Aspartate 1-decarboxylase (126 aa).

S25 serves as the catalytic Schiff-base intermediate with substrate; via pyruvic acid. Pyruvic acid (Ser) is present on S25. T57 is a substrate binding site. Y58 acts as the Proton donor in catalysis. G73–A75 serves as a coordination point for substrate.

The protein belongs to the PanD family. Heterooctamer of four alpha and four beta subunits. Requires pyruvate as cofactor. Post-translationally, is synthesized initially as an inactive proenzyme, which is activated by self-cleavage at a specific serine bond to produce a beta-subunit with a hydroxyl group at its C-terminus and an alpha-subunit with a pyruvoyl group at its N-terminus.

It is found in the cytoplasm. It carries out the reaction L-aspartate + H(+) = beta-alanine + CO2. It functions in the pathway cofactor biosynthesis; (R)-pantothenate biosynthesis; beta-alanine from L-aspartate: step 1/1. In terms of biological role, catalyzes the pyruvoyl-dependent decarboxylation of aspartate to produce beta-alanine. In Erwinia tasmaniensis (strain DSM 17950 / CFBP 7177 / CIP 109463 / NCPPB 4357 / Et1/99), this protein is Aspartate 1-decarboxylase.